The sequence spans 853 residues: MICAL-like protein 1 (853 aa).

Residues 2-108 (AGPRGALLAW…YVSQYYNHFA (107 aa)) enclose the Calponin-homology (CH) domain. Disordered stretches follow at residues 118 to 162 (PRKG…TPSS) and 224 to 659 (SGRS…FPLI). Polar residues predominate over residues 145 to 162 (ECSSGSLSKQGSHRTPSS). Positions 162-224 (STCAACQQHV…AEHCARLGPS (63 aa)) constitute an LIM zinc-binding domain. Residues serine 292 and serine 306 each carry the phosphoserine modification. Threonine 312 and threonine 315 each carry phosphothreonine. The segment covering 355–366 (LSERTPAPRKDP) has biased composition (basic and acidic residues). A compositionally biased stretch (pro residues) spans 381-394 (APLPPSSSPGPPPG). Position 388 is a phosphoserine (serine 388). The short motif at 419–421 (NPF) is the NPF1 element. Residues 429-445 (PAAPSPAPGPAPTPPES) show a composition bias toward pro residues. Residues threonine 457 and threonine 459 each carry the phosphothreonine modification. 4 positions are modified to phosphoserine: serine 460, serine 461, serine 474, and serine 476. Composition is skewed to low complexity over residues 495 to 515 (PSPA…APSE) and 541 to 553 (SASL…LSSS). A phosphoserine mark is found at serine 568 and serine 611. Polar residues predominate over residues 607 to 618 (PGTSSPQLQVKS). The NPF2 signature appears at 623 to 625 (NPF). The segment at 642–853 (KGSKPARPPA…TKSKCPGDRS (212 aa)) is mediates the interaction with RAB13 and RAB35 and intramolecular interaction with the CH domain. One can recognise a bMERB domain in the interval 661–808 (RKVQSDQYIP…EEEEDKMLEA (148 aa)). A coiled-coil region spans residues 671–701 (EEDIHGEIDTIERQLDALEHRGVLLEEKLRG). Positions 690–853 (HRGVLLEEKL…TKSKCPGDRS (164 aa)) are necessary and sufficient to associate with tubular recycling endosome membranes, mediate phosphatidic acid-binding and membrane tubulation. Serine 730 bears the Phosphoserine mark. The stretch at 791–820 (CLDEDRQREEEEDKMLEAMIKKKEFQKETE) forms a coiled coil.

In terms of assembly, homooligomer. Interacts (via NPF1 motif) with EHD1 (via EH domain); the interaction is direct and probably recruits EHD1 to membranes. Interacts with EHD3 (via EH domain). Interacts with RAB35 (GTP-bound form); the interaction is direct and probably recruits MICALL1 to membranes. Interacts with ACAP2; the interaction is indirect through RAB35. Interacts with RAB8A (GTP-bound form); regulates RAB8A association with recycling endosomes. Interacts with RAB13 (GTP-bound form). Interacts with ARF6 (GTP-bound form). Interacts with PACSIN2 (via the SH3 domain). Interacts with DPYSL2.

It is found in the recycling endosome membrane. It localises to the late endosome membrane. Its subcellular location is the cell projection. The protein resides in the cilium membrane. The protein localises to the cytoplasm. It is found in the cytoskeleton. It localises to the microtubule organizing center. Its subcellular location is the centrosome. The protein resides in the centriole. Functionally, lipid-binding protein with higher affinity for phosphatidic acid, a lipid enriched in recycling endosome membranes. On endosome membranes, acts as a downstream effector of Rab proteins recruiting cytosolic proteins to regulate membrane tubulation. Involved in a late step of receptor-mediated endocytosis regulating for instance endocytosed-EGF receptor trafficking. Alternatively, regulates slow endocytic recycling of endocytosed proteins back to the plasma membrane. Also involved in cargo protein delivery to the plasma membrane. Plays a role in ciliogenesis coordination, recruits EHD1 to primary cilium where it is anchored to the centriole through interaction with tubulins. May indirectly play a role in neurite outgrowth. The protein is MICAL-like protein 1 (MICALL1) of Bos taurus (Bovine).